The primary structure comprises 130 residues: Small ribosomal subunit protein uS8 (130 aa).

The protein belongs to the universal ribosomal protein uS8 family. In terms of assembly, part of the 30S ribosomal subunit.

In terms of biological role, one of the primary rRNA binding proteins, it binds directly to 16S rRNA central domain where it helps coordinate assembly of the platform of the 30S subunit. This chain is Small ribosomal subunit protein uS8, found in Pyrococcus horikoshii (strain ATCC 700860 / DSM 12428 / JCM 9974 / NBRC 100139 / OT-3).